An 82-amino-acid polypeptide reads, in one-letter code: Small ribosomal subunit protein uS17 (82 aa).

It belongs to the universal ribosomal protein uS17 family. As to quaternary structure, part of the 30S ribosomal subunit.

In terms of biological role, one of the primary rRNA binding proteins, it binds specifically to the 5'-end of 16S ribosomal RNA. This is Small ribosomal subunit protein uS17 from Sulfurimonas denitrificans (strain ATCC 33889 / DSM 1251) (Thiomicrospira denitrificans (strain ATCC 33889 / DSM 1251)).